The following is a 438-amino-acid chain: Minor myo-inositol transporter IolF (438 aa).

A run of 12 helical transmembrane segments spans residues 15–35 (IAAALANYIDAGSIVAGSAGL), 49–69 (IGLLGALSANAISAAVGALLG), 86–106 (MLVYALGICLVLFGVNFPMLL), 108–128 (GYIIIGLSVGADITASWTIIA), 147–167 (WAAGAVVVLLLSVLAGDLGLL), 171–191 (IVFAHLLVIALITYILRIRLP), 230–250 (ILFLMGVYLVWNLAAGVMGFF), 268–288 (LLQMGLFIFTGLGVALIFMPF), 295–312 (TVFGIAAFMAVIGWTLFL), 317–334 (GLPILLLFIVVIGINNGA), 359–379 (LMFFLVRISIGIWSLFVPMII), and 387–407 (MAAILLGCVTASMIIGLLFAP).

Belongs to the major facilitator superfamily. Sugar transporter (TC 2.A.1.1) family.

The protein localises to the cell membrane. The protein operates within polyol metabolism; myo-inositol degradation into acetyl-CoA. Minor myo-inositol uptake transporter. This Bacillus subtilis (strain 168) protein is Minor myo-inositol transporter IolF (iolF).